A 966-amino-acid polypeptide reads, in one-letter code: Serine/threonine-protein kinase 10 (966 aa).

Residues serine 13 and serine 20 each carry the phosphoserine modification. The Protein kinase domain occupies 36 to 294; it reads WEIVGELGDG…AAQLLQHPFV (259 aa). ATP is bound by residues 42-50 and lysine 65; that span reads LGDGAFGKV. Aspartate 157 serves as the catalytic Proton acceptor. The activation segment stretch occupies residues 175–224; the sequence is DFGVSAKNLKTLQKRDSFIGTPYWMAPEVVLCETMKDAPYDYKADIWSLG. The residue at position 185 (threonine 185) is a Phosphothreonine; by autocatalysis. A Phosphoserine modification is found at serine 191. Composition is skewed to polar residues over residues 341-363 and 371-392; these read TQDSANVTQPSLDSNKLLQDSST and QEPVSGSCSQPSGDGPLQTTSP. Residues 341-497 are disordered; sequence TQDSANVTQP…NLSTSESMDY (157 aa). Positions 421 to 430 are enriched in basic and acidic residues; the sequence is IQMDEEKQIP. A phosphoserine mark is found at serine 437, serine 449, serine 453, and serine 484. The segment covering 438–456 has biased composition (polar residues); the sequence is PAASKSQKANQSRPNSSAL. A compositionally biased stretch (polar residues) spans 485–497; sequence DCSNLSTSESMDY. Phosphoserine occurs at positions 513 and 548. The stretch at 588–936 forms a coiled coil; the sequence is LQLEQMHKRF…LNQKKREQEM (349 aa). 3 disordered regions span residues 660–692, 826–865, and 901–966; these read KKEVKSEVEKLPRQQRKESMKQKMEEHSQKKQR, INGAGSASEQREKIKQFSQQEEKRQKAERLQQQQKHENQM, and LDES…GDAS. Composition is skewed to basic and acidic residues over residues 834 to 865 and 901 to 946; these read EQREKIKQFSQQEEKRQKAERLQQQQKHENQM and LDES…EAEP. Phosphothreonine is present on threonine 950. The span at 950-966 shows a compositional bias: polar residues; that stretch reads TPSKASNFFPYSSGDAS.

Belongs to the protein kinase superfamily. STE Ser/Thr protein kinase family. STE20 subfamily. In terms of assembly, homodimer; homodimerization is required for activation segment autophosphorylation. In terms of processing, autophosphorylates following homodimerization, leading to activation of the protein. As to expression, expressed predominantly in lymphoid organs such as spleen, thymus, and bone marrow.

It is found in the cell membrane. It catalyses the reaction L-seryl-[protein] + ATP = O-phospho-L-seryl-[protein] + ADP + H(+). The catalysed reaction is L-threonyl-[protein] + ATP = O-phospho-L-threonyl-[protein] + ADP + H(+). Inhibited by the pyrrole-indolinone inhibitor SU11274 (K00593): intercalates between the ATP-binding Lys-65 and alpha-C glutamate (Glu-81), resulting in a partial disordering of the lysine side chain. Also specifically inhibited by erlotinib. Slightly inhibited by gefitinib. In terms of biological role, serine/threonine-protein kinase involved in regulation of lymphocyte migration. Phosphorylates MSN, and possibly PLK1. Involved in regulation of lymphocyte migration by mediating phosphorylation of ERM proteins such as MSN. Acts as a negative regulator of MAP3K1/MEKK1. May also act as a cell cycle regulator by acting as a polo kinase kinase: mediates phosphorylation of PLK1 in vitro; however such data require additional evidences in vivo. The polypeptide is Serine/threonine-protein kinase 10 (Stk10) (Mus musculus (Mouse)).